A 98-amino-acid polypeptide reads, in one-letter code: Large ribosomal subunit protein uL23 (98 aa).

Belongs to the universal ribosomal protein uL23 family. In terms of assembly, part of the 50S ribosomal subunit. Contacts protein L29, and trigger factor when it is bound to the ribosome.

Its function is as follows. One of the early assembly proteins it binds 23S rRNA. One of the proteins that surrounds the polypeptide exit tunnel on the outside of the ribosome. Forms the main docking site for trigger factor binding to the ribosome. This is Large ribosomal subunit protein uL23 from Bordetella bronchiseptica (strain ATCC BAA-588 / NCTC 13252 / RB50) (Alcaligenes bronchisepticus).